A 62-amino-acid polypeptide reads, in one-letter code: Cecropin-A (62 aa).

The first 20 residues, 1 to 20 (MNLVKILFCVFACLVFTVTA), serve as a signal peptide directing secretion. The propeptide at 21–24 (VPEP) is removed by a dipeptidylpeptidase. Position 60 is a threonine amide (Thr60).

The protein belongs to the cecropin family.

The protein resides in the secreted. Its function is as follows. Has antibacterial activity. The chain is Cecropin-A from Trichoplusia ni (Cabbage looper).